A 425-amino-acid polypeptide reads, in one-letter code: Serine--tRNA ligase (425 aa).

Thr-230–Glu-232 provides a ligand contact to L-serine. Residue Arg-261–Glu-263 participates in ATP binding. Residue Glu-284 coordinates L-serine. Position 348–351 (Glu-348–Ser-351) interacts with ATP. L-serine is bound at residue Ser-384.

This sequence belongs to the class-II aminoacyl-tRNA synthetase family. Type-1 seryl-tRNA synthetase subfamily. Homodimer. The tRNA molecule binds across the dimer.

The protein localises to the cytoplasm. It carries out the reaction tRNA(Ser) + L-serine + ATP = L-seryl-tRNA(Ser) + AMP + diphosphate + H(+). The catalysed reaction is tRNA(Sec) + L-serine + ATP = L-seryl-tRNA(Sec) + AMP + diphosphate + H(+). It functions in the pathway aminoacyl-tRNA biosynthesis; selenocysteinyl-tRNA(Sec) biosynthesis; L-seryl-tRNA(Sec) from L-serine and tRNA(Sec): step 1/1. In terms of biological role, catalyzes the attachment of serine to tRNA(Ser). Is also able to aminoacylate tRNA(Sec) with serine, to form the misacylated tRNA L-seryl-tRNA(Sec), which will be further converted into selenocysteinyl-tRNA(Sec). This is Serine--tRNA ligase from Nitratidesulfovibrio vulgaris (strain DSM 19637 / Miyazaki F) (Desulfovibrio vulgaris).